Reading from the N-terminus, the 2699-residue chain is UPF0648 protein C3H5.09c (2699 aa).

Asparagine 21 is a glycosylation site (N-linked (GlcNAc...) asparagine). The chain crosses the membrane as a helical span at residues 24–44 (FVWVVIATGFLFHLVLFVLSY). N-linked (GlcNAc...) asparagine glycans are attached at residues asparagine 288, asparagine 293, asparagine 334, asparagine 345, asparagine 433, asparagine 507, asparagine 551, asparagine 655, asparagine 760, asparagine 993, asparagine 1000, asparagine 1003, asparagine 1006, and asparagine 1009. Residues 975–1021 (KAKDPSPKSASESSSFYQNGSDIDDNDSNSSNTSNHTTENANAQQRK) are disordered. Residues 981–995 (PKSASESSSFYQNGS) are compositionally biased toward low complexity. A coiled-coil region spans residues 1006 to 1033 (NTSNHTTENANAQQRKLEDLNRSFEDFL). The segment covering 1010 to 1019 (HTTENANAQQ) has biased composition (polar residues). Residues asparagine 1026, asparagine 1039, asparagine 1046, asparagine 1236, asparagine 1255, asparagine 1344, asparagine 1527, asparagine 1595, asparagine 1791, asparagine 1916, asparagine 2032, asparagine 2048, asparagine 2256, asparagine 2285, asparagine 2388, asparagine 2407, asparagine 2417, asparagine 2508, and asparagine 2622 are each glycosylated (N-linked (GlcNAc...) asparagine). Residues 1758–1818 (QYELLQKRRK…TLSDHYRLLE (61 aa)) are a coiled coil. Positions 2393-2447 (FPHIYSRNHDKRKENGSQGEADNSNYSGSLMRRRTNDQEEDALATPSSSRRDSRS) are disordered. Polar residues predominate over residues 2408-2420 (GSQGEADNSNYSG). Disordered stretches follow at residues 2606–2632 (AEENQEEGSPASAISRNHSTRSSLNSP) and 2647–2676 (ADIVKRHIPPTINGKRSKNKGNEGSNARVD). Positions 2617 to 2632 (SAISRNHSTRSSLNSP) are enriched in polar residues.

Belongs to the UPF0648 family.

It is found in the membrane. This chain is UPF0648 protein C3H5.09c, found in Schizosaccharomyces pombe (strain 972 / ATCC 24843) (Fission yeast).